The primary structure comprises 178 residues: Cytochrome b6-f complex iron-sulfur subunit 2 (178 aa).

A helical transmembrane segment spans residues 17 to 36; the sequence is LLNFFTGAIVAATASAAIYP. Residues 61–161 form the Rieske domain; it reads GHPIPASQIL…VQVKDDYIWI (101 aa). 4 residues coordinate [2Fe-2S] cluster: Cys107, His109, Cys125, and His128. A disulfide bridge links Cys112 with Cys127.

This sequence belongs to the Rieske iron-sulfur protein family. In terms of assembly, the 4 large subunits of the cytochrome b6-f complex are cytochrome b6, subunit IV (17 kDa polypeptide, PetD), cytochrome f and the Rieske protein, while the 4 small subunits are PetG, PetL, PetM and PetN. The complex functions as a dimer. It depends on [2Fe-2S] cluster as a cofactor.

The protein localises to the cellular thylakoid membrane. The catalysed reaction is 2 oxidized [plastocyanin] + a plastoquinol + 2 H(+)(in) = 2 reduced [plastocyanin] + a plastoquinone + 4 H(+)(out). Functionally, component of the cytochrome b6-f complex, which mediates electron transfer between photosystem II (PSII) and photosystem I (PSI), cyclic electron flow around PSI, and state transitions. This is Cytochrome b6-f complex iron-sulfur subunit 2 from Trichormus variabilis (strain ATCC 29413 / PCC 7937) (Anabaena variabilis).